A 547-amino-acid polypeptide reads, in one-letter code: Chaperonin GroEL 1 (547 aa).

ATP-binding positions include 30 to 33 (TLGP), Lys-51, 87 to 91 (DGTTT), Gly-415, and Asp-496.

Belongs to the chaperonin (HSP60) family. In terms of assembly, forms a cylinder of 14 subunits composed of two heptameric rings stacked back-to-back. Interacts with the co-chaperonin GroES.

Its subcellular location is the cytoplasm. The enzyme catalyses ATP + H2O + a folded polypeptide = ADP + phosphate + an unfolded polypeptide.. Functionally, together with its co-chaperonin GroES, plays an essential role in assisting protein folding. The GroEL-GroES system forms a nano-cage that allows encapsulation of the non-native substrate proteins and provides a physical environment optimized to promote and accelerate protein folding. The protein is Chaperonin GroEL 1 of Rhodopseudomonas palustris (strain ATCC BAA-98 / CGA009).